A 549-amino-acid chain; its full sequence is Cell death protein 4 (549 aa).

The CARD domain maps to 1–91; the sequence is MLCEIECRAL…HLADFLEDYI (91 aa). ATP contacts are provided by Y131, G162, G164, K165, S166, V167, R273, T367, and Y369. An NB-ARC domain is found at 133 to 417; it reads REYHVDRVIK…KLWSCVIPVD (285 aa). Position 166 (S166) interacts with Mg(2+).

In terms of assembly, associates as an asymmetric homodimer with ced-9. Only one ced-4 molecule within the dimer interacts directly with ced-9. Upon release from ced-9, forms a multimer, known as the apoptosome, and interacts with ced-3; the interaction results in ced-3 autoproteolytic cleavage and activation. Multiple oligomeric states of the apoptosome are observed including hexamers, heptamers and octamers. The hexamers likely represent a pre-mature state of the apoptosome and may contribute to the regulation of ced-3 activation. The apoptosome multimer also interacts with two processed ced-3 to form a stable holoenzyme. Interacts with sex-determining protein fem-1. May form a complex composed of ced-3, ced-4 and mac-1 or of ced-9, ced-4 and mac-1. Within the complex, interacts with mac-1.

Its subcellular location is the mitochondrion. It is found in the cytoplasm. The protein localises to the perinuclear region. Functionally, component of the egl-1, ced-9, ced-4 and ced-3 apoptotic signaling cascade required for the initiation of programmed cell death in cells fated to die during embryonic and postembryonic development. During oogenesis, required for germline apoptosis downstream of ced-9 and upstream of ced-3 but independently of egl-1. May regulate germline apoptosis in response to DNA damage, probably downstream of let-60/ras and mpk-1 pathway. Regulates CEP neuron apoptosis in response to high Al(3+) levels. During male tail morphogenesis, promotes apoptosis of the tail-spike cell upstream of ced-3 but independently of egl-1 and ced-9. May play a role in sex-specific cell apoptosis, probably by promoting ced-3-mediated cleavage of sex-determining protein fem-1. During larval development, required for the elimination of transient presynaptic components downstream of egl-1 and ced-9 and upstream of ced-3 apoptotic pathway. Downstream of calreticulin crt-1 and upstream of ced-3 and independently of egl-1 and ced-9, plays a role in the initial steps of axonal regrowth following axotomy. Together with ain-1, a component of the miRNA-induced-silencing complex (miRISC), and probably upstream of ced-3, regulates temporal cell fate patterning during larval development. May play a role in resistance to S.typhimurium-mediated infection. In terms of biological role, plays a major role in programmed cell death. egl-1 binds to and directly inhibits the activity of ced-9, releasing the cell death activator ced-4 from a ced-9/ced-4-containing protein complex and allowing ced-4 to induce caspase ced-3 autoproteolytic cleavage and activation. Also forms a holoenzyme with processed ced-3 enhancing ced-3 activity. Prevents programmed cell death. This is Cell death protein 4 (ced-4) from Caenorhabditis elegans.